We begin with the raw amino-acid sequence, 1166 residues long: Peroxisomal ATPase PEX6 (1166 aa).

It belongs to the AAA ATPase family. As to quaternary structure, interacts with PEX1; forming the PEX1-PEX6 AAA ATPase complex, which is composed of a heterohexamer formed by a trimer of PEX1-PEX6 dimers.

It localises to the membrane. The enzyme catalyses ATP + H2O = ADP + phosphate + H(+). Component of the PEX1-PEX6 AAA ATPase complex involved in peroxisome biosynthesis. The complex acts as a protein dislocase complex that mediates the ATP-dependent extraction of the PEX5 receptor from peroxisomal membranes, an essential step for PEX5 recycling. Specifically recognizes PEX5 monoubiquitinated at 'Cys-6', and pulls it out of the peroxisome lumen through the PEX2-PEX10-PEX12 retrotranslocation channel. Extraction by the PEX1-PEX6 AAA ATPase complex is accompanied by unfolding of the TPR repeats and release of bound cargo from PEX5. The protein is Peroxisomal ATPase PEX6 of Komagataella phaffii (strain GS115 / ATCC 20864) (Yeast).